The primary structure comprises 669 residues: Threonine--tRNA ligase (669 aa).

In terms of domain architecture, TGS spans 3 to 60 (DAQQITLIVDGEETKVTEGTTGAELFFERRDVVVARVNGVLKDLDQVLTEGADVEGVT). A catalytic region spans residues 260–566 (DHRKLGVELD…LTEHYAGAFP (307 aa)). Residues Cys365, His416, and His543 each coordinate Zn(2+).

It belongs to the class-II aminoacyl-tRNA synthetase family. In terms of assembly, homodimer. It depends on Zn(2+) as a cofactor.

The protein resides in the cytoplasm. It carries out the reaction tRNA(Thr) + L-threonine + ATP = L-threonyl-tRNA(Thr) + AMP + diphosphate + H(+). Catalyzes the attachment of threonine to tRNA(Thr) in a two-step reaction: L-threonine is first activated by ATP to form Thr-AMP and then transferred to the acceptor end of tRNA(Thr). Also edits incorrectly charged L-seryl-tRNA(Thr). In Paenarthrobacter aurescens (strain TC1), this protein is Threonine--tRNA ligase.